The chain runs to 214 residues: Adenylate kinase (214 aa).

10–15 (GAGKGT) serves as a coordination point for ATP. The segment at 30–59 (STGDMLRAAVKAGTELGKQAKEIMDAGKLV) is NMP. AMP contacts are provided by residues threonine 31, arginine 36, 57 to 59 (KLV), 85 to 88 (GFPR), and glutamine 92. An LID region spans residues 122-159 (GRRVHAASGRVYHVKFNPPKVEGKDDVTGEDLTIRKDD). Residues arginine 123 and 132–133 (VY) each bind ATP. Positions 156 and 167 each coordinate AMP. Arginine 200 contributes to the ATP binding site.

It belongs to the adenylate kinase family. In terms of assembly, monomer.

Its subcellular location is the cytoplasm. The enzyme catalyses AMP + ATP = 2 ADP. It participates in purine metabolism; AMP biosynthesis via salvage pathway; AMP from ADP: step 1/1. Functionally, catalyzes the reversible transfer of the terminal phosphate group between ATP and AMP. Plays an important role in cellular energy homeostasis and in adenine nucleotide metabolism. This Pectobacterium carotovorum subsp. carotovorum (strain PC1) protein is Adenylate kinase.